We begin with the raw amino-acid sequence, 390 residues long: Tryptophan synthase beta chain 2 (390 aa).

Lys-83 carries the N6-(pyridoxal phosphate)lysine modification.

It belongs to the TrpB family. Tetramer of two alpha and two beta chains. It depends on pyridoxal 5'-phosphate as a cofactor.

The catalysed reaction is (1S,2R)-1-C-(indol-3-yl)glycerol 3-phosphate + L-serine = D-glyceraldehyde 3-phosphate + L-tryptophan + H2O. The protein operates within amino-acid biosynthesis; L-tryptophan biosynthesis; L-tryptophan from chorismate: step 5/5. Functionally, the beta subunit is responsible for the synthesis of L-tryptophan from indole and L-serine. The chain is Tryptophan synthase beta chain 2 (trpB2) from Methanothermobacter marburgensis (strain ATCC BAA-927 / DSM 2133 / JCM 14651 / NBRC 100331 / OCM 82 / Marburg) (Methanobacterium thermoautotrophicum).